We begin with the raw amino-acid sequence, 474 residues long: PRAME family member 8 (474 aa).

The LRR 1; degenerate repeat unit spans residues 97-122 (QSKLQVLDLRNVDENFCDIFSGATAS). One copy of the LRR 2; degenerate repeat lies at 177-201 (HVCCKELQVFGMPIHSIIEVLNMVE). One copy of the LRR 3; degenerate repeat lies at 202–228 (LDCIQEVEVCCPWELSTLVKFAPYLGQ). One copy of the LRR 4; degenerate repeat lies at 229 to 264 (MRNLRKLVLFNIRASACIPPDNKGQFIARFTSQFLK). 5 LRR repeats span residues 265-290 (LDYF…LRCL), 291-322 (QASL…RQLK), 323-341 (ELDL…PLTG), 347-374 (VATL…VLSR), and 375-399 (CSQL…LLRH).

Belongs to the PRAME family.

In Homo sapiens (Human), this protein is PRAME family member 8.